The chain runs to 185 residues: Elongation factor P (185 aa).

This sequence belongs to the elongation factor P family.

It localises to the cytoplasm. Its pathway is protein biosynthesis; polypeptide chain elongation. Its function is as follows. Involved in peptide bond synthesis. Stimulates efficient translation and peptide-bond synthesis on native or reconstituted 70S ribosomes in vitro. Probably functions indirectly by altering the affinity of the ribosome for aminoacyl-tRNA, thus increasing their reactivity as acceptors for peptidyl transferase. The polypeptide is Elongation factor P (Paraburkholderia xenovorans (strain LB400)).